Consider the following 193-residue polypeptide: Holliday junction branch migration complex subunit RuvA (193 aa).

A domain I region spans residues M1 to A63. The segment at E64–I142 is domain II. The tract at residues S143–S145 is flexible linker. Residues S145–L193 are domain III.

The protein belongs to the RuvA family. Homotetramer. Forms an RuvA(8)-RuvB(12)-Holliday junction (HJ) complex. HJ DNA is sandwiched between 2 RuvA tetramers; dsDNA enters through RuvA and exits via RuvB. An RuvB hexamer assembles on each DNA strand where it exits the tetramer. Each RuvB hexamer is contacted by two RuvA subunits (via domain III) on 2 adjacent RuvB subunits; this complex drives branch migration. In the full resolvosome a probable DNA-RuvA(4)-RuvB(12)-RuvC(2) complex forms which resolves the HJ.

Its subcellular location is the cytoplasm. Functionally, the RuvA-RuvB-RuvC complex processes Holliday junction (HJ) DNA during genetic recombination and DNA repair, while the RuvA-RuvB complex plays an important role in the rescue of blocked DNA replication forks via replication fork reversal (RFR). RuvA specifically binds to HJ cruciform DNA, conferring on it an open structure. The RuvB hexamer acts as an ATP-dependent pump, pulling dsDNA into and through the RuvAB complex. HJ branch migration allows RuvC to scan DNA until it finds its consensus sequence, where it cleaves and resolves the cruciform DNA. The polypeptide is Holliday junction branch migration complex subunit RuvA (Flavobacterium psychrophilum (strain ATCC 49511 / DSM 21280 / CIP 103535 / JIP02/86)).